Here is a 392-residue protein sequence, read N- to C-terminus: Formate-dependent phosphoribosylglycinamide formyltransferase (392 aa).

N(1)-(5-phospho-beta-D-ribosyl)glycinamide-binding positions include 22–23 (EL) and Glu-82. ATP-binding positions include Arg-114, Lys-155, 160 to 165 (SSGHGQ), 195 to 198 (EGFI), and Glu-203. The region spanning 119-307 (RLAAEELGLK…QFALHARAIL (189 aa)) is the ATP-grasp domain. The Mg(2+) site is built by Glu-266 and Glu-278. N(1)-(5-phospho-beta-D-ribosyl)glycinamide is bound by residues Asp-285, Lys-355, and 362–363 (RR).

The protein belongs to the PurK/PurT family. As to quaternary structure, homodimer.

Its subcellular location is the cell inner membrane. It carries out the reaction N(1)-(5-phospho-beta-D-ribosyl)glycinamide + formate + ATP = N(2)-formyl-N(1)-(5-phospho-beta-D-ribosyl)glycinamide + ADP + phosphate + H(+). It functions in the pathway purine metabolism; IMP biosynthesis via de novo pathway; N(2)-formyl-N(1)-(5-phospho-D-ribosyl)glycinamide from N(1)-(5-phospho-D-ribosyl)glycinamide (formate route): step 1/1. In terms of biological role, involved in the de novo purine biosynthesis. Catalyzes the transfer of formate to 5-phospho-ribosyl-glycinamide (GAR), producing 5-phospho-ribosyl-N-formylglycinamide (FGAR). Formate is provided by PurU via hydrolysis of 10-formyl-tetrahydrofolate. The protein is Formate-dependent phosphoribosylglycinamide formyltransferase of Mannheimia haemolytica (Pasteurella haemolytica).